The following is a 187-amino-acid chain: Preprocaerulein clone PXC202 (187 aa).

Residues 1 to 9 constitute a propeptide that is removed on maturation; it reads NDERRFADG. The tract at residues 1–21 is disordered; it reads NDERRFADGQQDYTGWMDFGR. Tyr13 is modified (sulfotyrosine). Phe19 carries the phenylalanine amide modification. The propeptide occupies 23–73; the sequence is DDEDDVNERDVRGFGSFLGKALKAALKIGANALGGSPQQREANDERRFADG. Tyr77 carries the post-translational modification Sulfotyrosine. Phe83 is modified (phenylalanine amide). The propeptide occupies 87 to 137; that stretch reads DDEDDVNERDVRGFGSFLGKALKAALKIGANALGGSLQQREVNDERRFADG. Tyr141 carries the sulfotyrosine modification. The residue at position 147 (Phe147) is a Phenylalanine amide. A propeptide spanning residues 151-152 is cleaved from the precursor; it reads DG. Tyr156 is modified (sulfotyrosine). Phe162 bears the Phenylalanine amide mark. A propeptide spanning residues 166-187 is cleaved from the precursor; it reads DDEDDVHERDVRGFGSFLGKAL.

This sequence belongs to the gastrin/cholecystokinin family. In terms of tissue distribution, expressed by the skin glands.

It is found in the secreted. The pharmacological activities of caerulein are quite similar to the physiological activities of gastrin and related peptides. The sequence is that of Preprocaerulein clone PXC202 from Xenopus laevis (African clawed frog).